The primary structure comprises 121 residues: Small ribosomal subunit protein bS6 (121 aa).

Residues 94-121 (KAETGPSAVMKRVEKEEARKSSQQETAA) are disordered. The segment covering 104–115 (KRVEKEEARKSS) has biased composition (basic and acidic residues).

Belongs to the bacterial ribosomal protein bS6 family.

Binds together with bS18 to 16S ribosomal RNA. This chain is Small ribosomal subunit protein bS6, found in Leptothrix cholodnii (strain ATCC 51168 / LMG 8142 / SP-6) (Leptothrix discophora (strain SP-6)).